Here is a 1194-residue protein sequence, read N- to C-terminus: Peroxisomal ATPase PEX1 (1194 aa).

A disordered region spans residues 220–255 (KTRQRRMSHQGKSVKAKSLASTRHGKRRDDGSGPSG). Positions 221-234 (TRQRRMSHQGKSVK) are enriched in basic residues. Residues 538-730 (RSASVLLTGA…GPEPTLKIEK (193 aa)) form an AAA-cassette D1 region. Residues 546–553 (GARGSGKT) and 849–856 (GYPGCGKT) contribute to the ATP site. The segment at 844–1028 (GLLLYGYPGC…LYNAHLEAIH (185 aa)) is AAA-cassette D2. Disordered regions lie at residues 1062-1084 (YISF…LTNG), 1116-1139 (QVQQ…EPVI), and 1174-1194 (RSGE…SSLM). Positions 1066–1084 (SMGNKDSTGEPSTQPLTNG) are enriched in polar residues. Residues 1116 to 1127 (QVQQQQSQTNQA) show a composition bias toward low complexity.

The protein belongs to the AAA ATPase family. As to quaternary structure, interacts with PEX6; forming the PEX1-PEX6 AAA ATPase complex, which is composed of a heterohexamer formed by a trimer of PEX1-PEX6 dimers.

The protein localises to the cytoplasm. It localises to the cytosol. It is found in the peroxisome membrane. It catalyses the reaction ATP + H2O = ADP + phosphate + H(+). Functionally, component of the PEX1-PEX6 AAA ATPase complex, a protein dislocase complex that mediates the ATP-dependent extraction of the PEX5 receptor from peroxisomal membranes, an essential step for PEX5 recycling. Specifically recognizes PEX5 monoubiquitinated at 'Cys-6', and pulls it out of the peroxisome lumen through the PEX2-PEX10-PEX12 retrotranslocation channel. Extraction by the PEX1-PEX6 AAA ATPase complex is accompanied by unfolding of the TPR repeats and release of bound cargo from PEX5. Regulates autophagy and biogenesis of peroxisomes and Woronin bodies. Plays important roles in mycelial growth and development and stress response. Is also essential for conidiation and fatty acid utilization. Required for nematode predation via trap formation. The polypeptide is Peroxisomal ATPase PEX1 (Arthrobotrys oligospora (strain ATCC 24927 / CBS 115.81 / DSM 1491) (Nematode-trapping fungus)).